The sequence spans 382 residues: Galactokinase (382 aa).

34–37 is a substrate binding site; it reads EHTD. 124-130 contacts ATP; sequence GAGLSSS. Residues Ser130 and Glu162 each contribute to the Mg(2+) site. Asp174 serves as the catalytic Proton acceptor. A substrate-binding site is contributed by Tyr223.

It belongs to the GHMP kinase family. GalK subfamily.

It is found in the cytoplasm. The enzyme catalyses alpha-D-galactose + ATP = alpha-D-galactose 1-phosphate + ADP + H(+). It functions in the pathway carbohydrate metabolism; galactose metabolism. In terms of biological role, catalyzes the transfer of the gamma-phosphate of ATP to D-galactose to form alpha-D-galactose-1-phosphate (Gal-1-P). This Escherichia coli (strain SMS-3-5 / SECEC) protein is Galactokinase.